A 359-amino-acid polypeptide reads, in one-letter code: Membrane-bound lytic murein transglycosylase C (359 aa).

A signal peptide spans 1–16; sequence MKKYLALALIAPLLIS. C17 carries the N-palmitoyl cysteine lipid modification. C17 carries S-diacylglycerol cysteine lipidation.

It belongs to the transglycosylase Slt family.

Its subcellular location is the cell outer membrane. It catalyses the reaction Exolytic cleavage of the (1-&gt;4)-beta-glycosidic linkage between N-acetylmuramic acid (MurNAc) and N-acetylglucosamine (GlcNAc) residues in peptidoglycan, from either the reducing or the non-reducing ends of the peptidoglycan chains, with concomitant formation of a 1,6-anhydrobond in the MurNAc residue.. Its function is as follows. Murein-degrading enzyme. May play a role in recycling of muropeptides during cell elongation and/or cell division. This chain is Membrane-bound lytic murein transglycosylase C, found in Escherichia coli (strain SMS-3-5 / SECEC).